The sequence spans 286 residues: NADPH-dependent 7-cyano-7-deazaguanine reductase (286 aa).

88–90 (VES) lines the substrate pocket. 90 to 91 (SK) provides a ligand contact to NADPH. Cys-194 functions as the Thioimide intermediate in the catalytic mechanism. The active-site Proton donor is Asp-201. 233 to 234 (HE) is a substrate binding site. An NADPH-binding site is contributed by 262–263 (RG).

The protein belongs to the GTP cyclohydrolase I family. QueF type 2 subfamily. In terms of assembly, homodimer.

It localises to the cytoplasm. The enzyme catalyses 7-aminomethyl-7-carbaguanine + 2 NADP(+) = 7-cyano-7-deazaguanine + 2 NADPH + 3 H(+). Its pathway is tRNA modification; tRNA-queuosine biosynthesis. Functionally, catalyzes the NADPH-dependent reduction of 7-cyano-7-deazaguanine (preQ0) to 7-aminomethyl-7-deazaguanine (preQ1). This chain is NADPH-dependent 7-cyano-7-deazaguanine reductase, found in Colwellia psychrerythraea (strain 34H / ATCC BAA-681) (Vibrio psychroerythus).